Consider the following 229-residue polypeptide: Protein ras-2 (229 aa).

15-22 (GDGGVGKT) is a GTP binding site. Positions 37–45 (YDPTIEDSY) match the Effector region motif. 62 to 66 (DTAGQ) lines the GTP pocket. The interval 109-132 (KESTSSPSAYPGSSPLAATNPSAP) is disordered. Low complexity predominate over residues 111 to 126 (STSSPSAYPGSSPLAA). Residue 140-143 (NKSD) coordinates GTP. Residues 188 to 229 (LRKQRQQGQSTPRALPPSGNSKSEKYSGTEKPKRPRGKCLII) form a disordered region. The segment covering 209-219 (KSEKYSGTEKP) has biased composition (basic and acidic residues). Positions 220 to 229 (KRPRGKCLII) are enriched in basic residues. Cys-226 bears the Cysteine methyl ester mark. Cys-226 is lipidated: S-farnesyl cysteine. Residues 227–229 (LII) constitute a propeptide, removed in mature form.

It belongs to the small GTPase superfamily. Ras family.

The protein localises to the cell membrane. The catalysed reaction is GTP + H2O = GDP + phosphate + H(+). Ras proteins bind GDP/GTP and possess intrinsic GTPase activity. This Neurospora crassa (strain ATCC 24698 / 74-OR23-1A / CBS 708.71 / DSM 1257 / FGSC 987) protein is Protein ras-2 (ras-2).